The following is a 465-amino-acid chain: Calcitonin gene-related peptide type 1 receptor (465 aa).

Positions 1 to 17 are cleaved as a signal peptide; it reads MVICLLLCTPTDIFVVA. Topologically, residues 18–141 are extracellular; the sequence is SPEVNETQEY…HTNEGRMTAM (124 aa). 4 N-linked (GlcNAc...) asparagine glycosylation sites follow: Asn-22, Asn-68, Asn-120, and Asn-125. 3 disulfides stabilise this stretch: Cys-50–Cys-76, Cys-67–Cys-107, and Cys-90–Cys-129. Residues 142 to 166 traverse the membrane as a helical segment; sequence NLFYLALIGHGLSLTSLLISLGIFF. Topologically, residues 167–177 are cytoplasmic; that stretch reads YFKSLSCQRIT. Residues 178 to 200 traverse the membrane as a helical segment; it reads LHKNLFFSFVLNSVITIIWLTAV. Residues 201 to 211 are Extracellular-facing; sequence ANNQELVQRNP. Residues 212-240 form a helical membrane-spanning segment; sequence TSCKVSQFIHLYLFGCNYFWMLCEGIYLH. Over 241–254 the chain is Cytoplasmic; that stretch reads TLIVVAVFAEKQHL. The chain crosses the membrane as a helical span at residues 255 to 275; sequence MWYYLLGWGFPLIPASIHAIA. The Extracellular portion of the chain corresponds to 276-291; that stretch reads RSYYYNDNCWISSNTS. An N-linked (GlcNAc...) asparagine glycan is attached at Asn-289. A helical transmembrane segment spans residues 292 to 316; that stretch reads LLYIIHGPICAALLVNLFFLLNIVR. Residues 317–331 are Cytoplasmic-facing; sequence VLITKLKVTHQAESS. A helical transmembrane segment spans residues 332 to 353; it reads LYMKAVRATLILVPLLGIQYVL. The Extracellular segment spans residues 354 to 368; that stretch reads LPYKPEGRVSSEIYD. A helical membrane pass occupies residues 369–389; sequence YIMHILMHYQGLLVATIFCFF. Residues 390–465 lie on the Cytoplasmic side of the membrane; sequence NGEVQGVLRR…SILKSENPFT (76 aa).

Belongs to the G-protein coupled receptor 2 family.

The protein localises to the cell membrane. In terms of biological role, may function as G protein-coupled receptor for calcitonin-gene-related peptides and adrenomedullin. Specificity may be modulated by accessory proteins. May activate cAMP-dependent pathway. The protein is Calcitonin gene-related peptide type 1 receptor (calcrl) of Oncorhynchus gorbuscha (Pink salmon).